Reading from the N-terminus, the 430-residue chain is Enolase (430 aa).

Q162 provides a ligand contact to (2R)-2-phosphoglycerate. E204 functions as the Proton donor in the catalytic mechanism. The Mg(2+) site is built by D241, E283, and D310. (2R)-2-phosphoglycerate is bound by residues K335, R364, S365, and K386. Catalysis depends on K335, which acts as the Proton acceptor.

This sequence belongs to the enolase family. The cofactor is Mg(2+).

The protein resides in the cytoplasm. Its subcellular location is the secreted. It is found in the cell surface. The catalysed reaction is (2R)-2-phosphoglycerate = phosphoenolpyruvate + H2O. It functions in the pathway carbohydrate degradation; glycolysis; pyruvate from D-glyceraldehyde 3-phosphate: step 4/5. Catalyzes the reversible conversion of 2-phosphoglycerate (2-PG) into phosphoenolpyruvate (PEP). It is essential for the degradation of carbohydrates via glycolysis. This is Enolase from Mycobacteroides abscessus (strain ATCC 19977 / DSM 44196 / CCUG 20993 / CIP 104536 / JCM 13569 / NCTC 13031 / TMC 1543 / L948) (Mycobacterium abscessus).